The primary structure comprises 380 residues: MANLRKTHPLLKIANDALVDLPAPSNISVWWNFGSLLGLCLATQILTGLFLAMHYTSDISTAFSSVCHICRDVSYGWLIRNIHANGASFFFICIYMHIARGLYYGSYLYKETWNIGVVLLLLTMMTAFVGYVLPWGQMSFWGATVITNLLSAVPYVGGALVQWIWGGFSVDNATLTRFFAFHFLFPFVIAAATVLHLLFLHETGSNNPAGINSDADKISFHPYFSYKDLLGFVAMLLGLTSLALFAPNLLGDPDNFTPANPLVTPPHIKPEWYFLFAYAILRSIPNKLGGVLALLFSILVLMVVPILHTSKQRGLTFRPLTQFLFWTLVADMLILTWIGGMPVEHPFIIIGQVASVIYFTIFLVLAPLAGWAENKALEWT.

4 helical membrane passes run 33-53 (FGSLLGLCLATQILTGLFLAM), 77-98 (WLIRNIHANGASFFFICIYMHI), 113-133 (WNIGVVLLLLTMMTAFVGYVL), and 178-198 (FFAFHFLFPFVIAAATVLHLL). 2 residues coordinate heme b: His-83 and His-97. 2 residues coordinate heme b: His-182 and His-196. His-201 is a binding site for a ubiquinone. Transmembrane regions (helical) follow at residues 226 to 246 (YKDLLGFVAMLLGLTSLALFA), 288 to 308 (LGGVLALLFSILVLMVVPILH), 320 to 340 (LTQFLFWTLVADMLILTWIGG), and 347 to 367 (FIIIGQVASVIYFTIFLVLAP).

Belongs to the cytochrome b family. The cytochrome bc1 complex contains 3 respiratory subunits (MT-CYB, CYC1 and UQCRFS1), 2 core proteins (UQCRC1 and UQCRC2) and probably 6 low-molecular weight proteins. It depends on heme b as a cofactor.

The protein resides in the mitochondrion inner membrane. Functionally, component of the ubiquinol-cytochrome c reductase complex (complex III or cytochrome b-c1 complex) that is part of the mitochondrial respiratory chain. The b-c1 complex mediates electron transfer from ubiquinol to cytochrome c. Contributes to the generation of a proton gradient across the mitochondrial membrane that is then used for ATP synthesis. The chain is Cytochrome b (mt-cyb) from Salmo trutta (Brown trout).